Here is a 94-residue protein sequence, read N- to C-terminus: Large ribosomal subunit protein bL25 (94 aa).

This sequence belongs to the bacterial ribosomal protein bL25 family. Part of the 50S ribosomal subunit; part of the 5S rRNA/L5/L18/L25 subcomplex. Contacts the 5S rRNA. Binds to the 5S rRNA independently of L5 and L18.

Functionally, this is one of the proteins that binds to the 5S RNA in the ribosome where it forms part of the central protuberance. This Escherichia coli (strain K12 / DH10B) protein is Large ribosomal subunit protein bL25.